The sequence spans 446 residues: Coagulation factor VII (446 aa).

An N-terminal signal peptide occupies residues 1-24; the sequence is MVPQTHGLLLLYFLLQLQGPLGAV. Positions 25-41 are excised as a propeptide; that stretch reads VFITQEEAHGVLHRQRR. In terms of domain architecture, Gla spans 42–86; that stretch reads ANSLLEELWSSSLERECNEERCSFEEAREIFKSPERTKQFWTIYS. 10 positions are modified to 4-carboxyglutamate: Glu47, Glu48, Glu55, Glu57, Glu60, Glu61, Glu66, Glu67, Glu70, and Glu76. Residues Cys58 and Cys63 are joined by a disulfide bond. Residues 87–123 form the EGF-like 1; calcium-binding domain; that stretch reads DGDQCASNPCQNGGTCQDHLKSYVCFCPLDFEGRNCE. 10 disulfides stabilise this stretch: Cys91–Cys102, Cys96–Cys111, Cys113–Cys122, Cys132–Cys143, Cys139–Cys153, Cys155–Cys168, Cys176–Cys303, Cys200–Cys205, Cys219–Cys235, and Cys351–Cys370. O-linked (Glc...) serine; alternate glycosylation occurs at Ser93. Residue Ser93 is glycosylated (O-linked (Xyl...) serine; alternate). Thr101 carries an O-linked (Fuc) threonine glycan. (3R)-3-hydroxyaspartate is present on Asp104. The 42-residue stretch at 128–169 folds into the EGF-like 2 domain; that stretch reads EQLICANENGDCDQYCRDHVGTKRTCSCHEDYVLQPDEVSCK. N-linked (GlcNAc...) asparagine glycosylation occurs at Asn186. Residues 194-433 enclose the Peptidase S1 domain; that stretch reads IVGGYVCPKG…YIDWLVKYMD (240 aa). The active-site Charge relay system is His234. N-linked (GlcNAc...) asparagine glycosylation is present at Asn244. Asp283 (charge relay system) is an active-site residue. Asp379 contacts substrate. Cys381 and Cys409 are disulfide-bonded. Ser385 serves as the catalytic Charge relay system.

Belongs to the peptidase S1 family. Heterodimer of a light chain and a heavy chain linked by a disulfide bond. The vitamin K-dependent, enzymatic carboxylation of some glutamate residues allows the modified protein to bind calcium. In terms of processing, the iron and 2-oxoglutarate dependent 3-hydroxylation of aspartate and asparagine is (R) stereospecific within EGF domains. Post-translationally, can be either O-glucosylated or O-xylosylated at Ser-93 by POGLUT1. Plasma.

The protein localises to the secreted. The enzyme catalyses Selective cleavage of Arg-|-Ile bond in factor X to form factor Xa.. In terms of biological role, initiates the extrinsic pathway of blood coagulation. Serine protease that circulates in the blood in a zymogen form. Factor VII is converted to factor VIIa by factor Xa, factor XIIa, factor IXa, or thrombin by minor proteolysis. In the presence of tissue factor and calcium ions, factor VIIa then converts factor X to factor Xa by limited proteolysis. Factor VIIa also converts factor IX to factor IXa in the presence of tissue factor and calcium. This is Coagulation factor VII (F7) from Rattus norvegicus (Rat).